A 349-amino-acid polypeptide reads, in one-letter code: Ferredoxin--NADP reductase 1 (349 aa).

FAD is bound by residues E36, K44, Y48, I88, L123, D290, and S331.

The protein belongs to the ferredoxin--NADP reductase type 2 family. Homodimer. FAD serves as cofactor.

The enzyme catalyses 2 reduced [2Fe-2S]-[ferredoxin] + NADP(+) + H(+) = 2 oxidized [2Fe-2S]-[ferredoxin] + NADPH. The protein is Ferredoxin--NADP reductase 1 of Bacillus thuringiensis (strain Al Hakam).